Here is an 87-residue protein sequence, read N- to C-terminus: Large ribosomal subunit protein bL31B (87 aa).

Belongs to the bacterial ribosomal protein bL31 family. Type B subfamily. Part of the 50S ribosomal subunit.

This Burkholderia pseudomallei (strain 1106a) protein is Large ribosomal subunit protein bL31B.